The following is a 584-amino-acid chain: Pentalenolactone D synthase (584 aa).

FAD is bound by residues I55–G56, D77–G78, T85–W86, D97–V98, Y103, V147, and M486.

It belongs to the FAD-binding monooxygenase family. Requires FAD as cofactor.

The catalysed reaction is 1-deoxy-11-oxopentalenate + NADPH + O2 + H(+) = pentalenolactone D + NADP(+) + H2O. It participates in antibiotic biosynthesis; pentalenolactone biosynthesis. Functionally, catalyzes the flavin-dependent Baeyer-Villiger oxidation of 1-deoxy-11-oxopentalenic acid to pentalenolactone D in the biosynthesis of pentalenolactone antibiotic. The polypeptide is Pentalenolactone D synthase (penE) (Streptomyces exfoliatus (Streptomyces hydrogenans)).